We begin with the raw amino-acid sequence, 259 residues long: Peroxiredoxin-4 (259 aa).

The Thioredoxin domain maps to 66 to 224 (IRIRKPAPAF…AIRTLKALKF (159 aa)). Catalysis depends on C111, which acts as the Cysteine sulfenic acid (-SOH) intermediate.

Belongs to the peroxiredoxin family. AhpC/Prx1 subfamily. As to quaternary structure, homodimer; disulfide-linked, upon oxidation. 5 homodimers assemble to form a ring-like decamer.

The protein resides in the cytoplasm. The protein localises to the endoplasmic reticulum. The catalysed reaction is a hydroperoxide + [thioredoxin]-dithiol = an alcohol + [thioredoxin]-disulfide + H2O. In terms of biological role, thiol-specific peroxidase that catalyzes the reduction of hydrogen peroxide and organic hydroperoxides to water and alcohols, respectively. Plays a role in cell protection against oxidative stress by detoxifying peroxides and as sensor of hydrogen peroxide-mediated signaling events. Regulates the activation of NF-kappa-B in the cytosol by a modulation of I-kappa-B-alpha phosphorylation. The sequence is that of Peroxiredoxin-4 (prdx4) from Dictyostelium discoideum (Social amoeba).